A 126-amino-acid polypeptide reads, in one-letter code: Activated RNA polymerase II transcriptional coactivator p15 (126 aa).

Positions 1–63 are disordered; the sequence is MPKSKELVSS…QSSNRDENMF (63 aa). A regulatory region spans residues 2-50; it reads PKSKELVSSSSSASDSDSEVDKKAKRKKQAAPEKPVKKQKTGESSKGAA. The segment covering 7-16 has biased composition (low complexity); it reads LVSSSSSASD. Positions 31–44 are enriched in basic and acidic residues; the sequence is AAPEKPVKKQKTGE. A compositionally biased stretch (low complexity) spans 45–55; the sequence is SSKGAASSKQS. Residues 76 to 100 are interaction with ssDNA; it reads FKGKVLIDIREYWMDQEGEMKPGRK.

Belongs to the transcriptional coactivator PC4 family.

Its subcellular location is the nucleus. In terms of biological role, general coactivator that functions cooperatively with TAFs and mediates functional interactions between upstream activators and the general transcriptional machinery. May be involved in stabilizing the multiprotein transcription complex. Binds single-stranded DNA. Also binds, in vitro, non-specifically to double-stranded DNA (ds DNA). The chain is Activated RNA polymerase II transcriptional coactivator p15 (SUB1) from Gallus gallus (Chicken).